We begin with the raw amino-acid sequence, 513 residues long: NADH-quinone oxidoreductase subunit N (513 aa).

Transmembrane regions (helical) follow at residues 20 to 40 (SVGF…LIVV), 49 to 69 (STLL…FIYQ), 88 to 108 (FAIF…VITM), 117 to 137 (ISSM…MMMM), 144 to 164 (LMIF…AGYF), 178 to 198 (LIYG…IYGV), 219 to 239 (FVML…IGAV), 260 to 280 (LSVA…YVAL), 295 to 315 (WFTL…VVAL), 323 to 343 (LLAY…IVMD), 351 to 371 (LFYL…VVLI), 394 to 414 (GAAL…IGFI), 429 to 451 (IFMW…YMLI), and 474 to 494 (LVAQ…GLFF).

Belongs to the complex I subunit 2 family. As to quaternary structure, NDH-1 is composed of 14 different subunits. Subunits NuoA, H, J, K, L, M, N constitute the membrane sector of the complex.

It localises to the cell inner membrane. It carries out the reaction a quinone + NADH + 5 H(+)(in) = a quinol + NAD(+) + 4 H(+)(out). Its function is as follows. NDH-1 shuttles electrons from NADH, via FMN and iron-sulfur (Fe-S) centers, to quinones in the respiratory chain. The immediate electron acceptor for the enzyme in this species is believed to be a menaquinone. Couples the redox reaction to proton translocation (for every two electrons transferred, four hydrogen ions are translocated across the cytoplasmic membrane), and thus conserves the redox energy in a proton gradient. The polypeptide is NADH-quinone oxidoreductase subunit N (Chlorobium chlorochromatii (strain CaD3)).